The sequence spans 258 residues: C1q-related factor (258 aa).

An N-terminal signal peptide occupies residues 1 to 16 (MLLVLVVLIPVLVSSG). A disordered region spans residues 39–120 (GPGAGARSDG…PGSGGSGAIS (82 aa)). A compositionally biased stretch (low complexity) spans 67–77 (GPQGKPGRTGK). The Collagen-like domain maps to 67–115 (GPQGKPGRTGKPGPPGPPGDRGPPGPVGPPGEKGEPGKPGPPGLPGSGG). The span at 78-95 (PGPPGPPGDRGPPGPVGP) shows a compositional bias: pro residues. Positions 125–258 (TTVPRVAFYA…TFSGFIIYSD (134 aa)) constitute a C1q domain.

Interacts with ADGRB3. Forms heterooligomers with C1QL4, when proteins are coexpressed; this interaction does not occur after secretion. In terms of tissue distribution, expressed in brainstem. More abundant in areas of the nervous system involved in motor function, such as the Purkinje cells of the cerebellum, the accessory olivary nucleus, the pons and the red nucleus.

Its subcellular location is the secreted. In terms of biological role, may regulate the number of excitatory synapses that are formed on hippocampus neurons. Has no effect on inhibitory synapses. The polypeptide is C1q-related factor (C1ql1) (Mus musculus (Mouse)).